We begin with the raw amino-acid sequence, 279 residues long: Urease accessory protein UreD (279 aa).

This sequence belongs to the UreD family. UreD, UreF and UreG form a complex that acts as a GTP-hydrolysis-dependent molecular chaperone, activating the urease apoprotein by helping to assemble the nickel containing metallocenter of UreC. The UreE protein probably delivers the nickel.

The protein localises to the cytoplasm. In terms of biological role, required for maturation of urease via the functional incorporation of the urease nickel metallocenter. This chain is Urease accessory protein UreD, found in Trichormus variabilis (strain ATCC 29413 / PCC 7937) (Anabaena variabilis).